A 535-amino-acid chain; its full sequence is Succinate-semialdehyde dehydrogenase, mitochondrial (535 aa).

A mitochondrion-targeting transit peptide spans 1–47 (MATCIWLRSCGARRLGWTFPGCRLRPRAGGLVPASGPAPGPAQLRCY). N6-acetyllysine; alternate is present on K126. K126 carries the post-translational modification N6-succinyllysine; alternate. 2 positions are modified to N6-succinyllysine: K135 and K184. NAD(+) is bound by residues R213 and 228 to 231 (KPAE). Residue R213 participates in substrate binding. K265 carries the post-translational modification N6-acetyllysine; alternate. An N6-succinyllysine; alternate modification is found at K265. 284 to 289 (GSTTTG) is an NAD(+) binding site. The Proton acceptor role is filled by E306. R334 provides a ligand contact to substrate. C340 serves as the catalytic Nucleophile. A disulfide bridge links C340 with C342. Residue K365 is modified to N6-acetyllysine. N6-succinyllysine is present on K402. K411 carries the N6-acetyllysine modification. S498 is a substrate binding site. S499 carries the phosphoserine modification.

Belongs to the aldehyde dehydrogenase family. As to quaternary structure, homotetramer.

Its subcellular location is the mitochondrion. It carries out the reaction succinate semialdehyde + NAD(+) + H2O = succinate + NADH + 2 H(+). Its pathway is amino-acid degradation; 4-aminobutanoate degradation. With respect to regulation, redox-regulated. Inhibited under oxydizing conditions. In terms of biological role, catalyzes one step in the degradation of the inhibitory neurotransmitter gamma-aminobutyric acid (GABA). The protein is Succinate-semialdehyde dehydrogenase, mitochondrial (ALDH5A1) of Pan paniscus (Pygmy chimpanzee).